We begin with the raw amino-acid sequence, 164 residues long: uncharacterized protein (164 aa).

A BFN domain is found at 1 to 129; it reads MGEVRVVGIR…AVLAQAGLLI (129 aa).

This is an uncharacterized protein from Mycobacterium tuberculosis (strain CDC 1551 / Oshkosh).